The following is a 230-amino-acid chain: MTSQDALKKQAAEKAVEYLESGMVVGLGSGSTATFAIHAIARLMKEGKLKDIVGIPSSTPTEEVARSLGIPLVGFEEHAVIDVTIDGADEVDPDLNLIKGGGGALLREKVVAQATKKNIIIVDESKISDKLGTIFALPVEVVPFATASETRFLESLGAKVTVRENQLGKAFKTDNHNRILDADFGPMDDAVKIGMALSQRAGVVEHGLFLGTTALVIVAGADGIREMKAA.

Substrate contacts are provided by residues S29–T32, D86–D89, and K99–G102. E108 serves as the catalytic Proton acceptor. K126 lines the substrate pocket.

The protein belongs to the ribose 5-phosphate isomerase family. In terms of assembly, homodimer.

The catalysed reaction is aldehydo-D-ribose 5-phosphate = D-ribulose 5-phosphate. It participates in carbohydrate degradation; pentose phosphate pathway; D-ribose 5-phosphate from D-ribulose 5-phosphate (non-oxidative stage): step 1/1. Functionally, catalyzes the reversible conversion of ribose-5-phosphate to ribulose 5-phosphate. This Desulfatibacillum aliphaticivorans protein is Ribose-5-phosphate isomerase A.